Here is a 342-residue protein sequence, read N- to C-terminus: S-adenosylmethionine:tRNA ribosyltransferase-isomerase (342 aa).

It belongs to the QueA family. In terms of assembly, monomer.

Its subcellular location is the cytoplasm. It carries out the reaction 7-aminomethyl-7-carbaguanosine(34) in tRNA + S-adenosyl-L-methionine = epoxyqueuosine(34) in tRNA + adenine + L-methionine + 2 H(+). It functions in the pathway tRNA modification; tRNA-queuosine biosynthesis. Functionally, transfers and isomerizes the ribose moiety from AdoMet to the 7-aminomethyl group of 7-deazaguanine (preQ1-tRNA) to give epoxyqueuosine (oQ-tRNA). This chain is S-adenosylmethionine:tRNA ribosyltransferase-isomerase, found in Streptococcus pyogenes serotype M6 (strain ATCC BAA-946 / MGAS10394).